The chain runs to 1270 residues: Activating transcription factor 7-interacting protein 1 (1270 aa).

M1 carries the post-translational modification N-acetylmethionine. K33 is covalently cross-linked (Glycyl lysine isopeptide (Lys-Gly) (interchain with G-Cter in SUMO2)). Phosphoserine is present on residues S57 and S113. Disordered regions lie at residues 104-223 and 235-402; these read DDDL…ISGD and TSVD…EDET. T118 is subject to Phosphothreonine. 2 stretches are compositionally biased toward low complexity: residues 132 to 203 and 248 to 269; these read GDPA…SSGD and DPASDDLASGDLSSSELASDDL. Basic and acidic residues-rich tracts occupy residues 310-327 and 333-343; these read SNKDDDFLEKNGADEKLE and DSLDEKNKADN. Residues 347–356 are compositionally biased toward acidic residues; that stretch reads ANEETLETDD. The span at 363–373 shows a compositional bias: basic and acidic residues; sequence RPPENEKKVEE. S445, S473, S474, S477, S479, and S496 each carry phosphoserine. 4 disordered regions span residues 455 to 570, 658 to 685, 822 to 862, and 886 to 906; these read TSLL…SKRR, EDLKKRHEHPPNPPVSPGKTVNDVNSNN, PPTV…PTAS, and RTSLPTVGPSGLYSPSTNRGP. Over residues 474–486 the composition is skewed to polar residues; sequence SFGSPSKQESSES. The segment covering 496-509 has biased composition (acidic residues); that stretch reads SDEEDISGEKDESE. The segment covering 524–552 has biased composition (basic and acidic residues); that stretch reads SNEKDNKPEEEEQVIHEDDERPSEKNEFS. The short motif at 553-571 is the Nuclear localization signal element; the sequence is RRKRSKSEDMDNVQSKRRR. A Glycyl lysine isopeptide (Lys-Gly) (interchain with G-Cter in SUMO2) cross-link involves residue K558. Residue S559 is modified to Phosphoserine. The tract at residues 562–817 is interaction with SETDB1; it reads MDNVQSKRRR…NQPSGNVEFI (256 aa). The stretch at 617–665 forms a coiled coil; the sequence is KTLAELKTRVEKIECNKRHKTVLTELQAKIARLTKRFEAAKEDLKKRHE. Phosphoserine is present on S673. A compositionally biased stretch (polar residues) spans 822–834; it reads PPTVSGLTKNPVS. Low complexity predominate over residues 843 to 854; that stretch reads KPNNVPSVPSPS. At S899 the chain carries Phosphoserine. Glycyl lysine isopeptide (Lys-Gly) (interchain with G-Cter in SUMO2) cross-links involve residues K910 and K938. Polar residues-rich tracts occupy residues 918 to 942 and 950 to 964; these read TSSAAEQNSNTTPRIENQTNKTIDA and DSTSQCGKATGSDSS. Disordered regions lie at residues 918–1026 and 1115–1160; these read TSSA…SQTT and STGP…STSL. The interaction with SUMO stretch occupies residues 965 to 975; it reads GVIDLTMDDEE. Composition is skewed to polar residues over residues 988 to 999 and 1016 to 1026; these read TPVSTMSSSQPV and GVPTSGPSQTT. The segment covering 1134 to 1151 has biased composition (pro residues); sequence PRPVHPAPLPEAPQPQRL. The interaction with MBD1 stretch occupies residues 1154-1270; sequence EAASTSLPQK…TDVISSTQSS (117 aa). The region spanning 1160–1270 is the Fibronectin type-III domain; the sequence is LPQKPHLKLA…TDVISSTQSS (111 aa).

The protein belongs to the MCAF family. In terms of assembly, interacts with MBD1; the interaction is enhanced when MBD1 is sumoylated. Interacts with SETDB1; the interaction protects SETDB1 from proteasomal degradation and is required to stimulate histone methyltransferase activity and facilitate the conversion of dimethylated to trimethylated H3 'Lys-9'. Interacts with SUMO ubiquitin-like proteins (SUMO1, SUNO2 and SUMO3), with a preference for SUMO2 and SUMO3. Interacts with SP1, ATF7 and ZHX1. Interacts with the general transcription machinery, including ERCC2, ERCC3, GTF2E1, GTF2E2 and POLR2A. (Microbial infection) Interacts with Epstein-Barr virus BRLF1/Rta protein, leading to the regulation of host genes in Epstein-Barr virus-infected cells. In terms of tissue distribution, detected at low levels in breast, lung and stomach; highly up-regulated in the corresponding cancerous tissues (at protein level).

It is found in the nucleus. Recruiter that couples transcriptional factors to general transcription apparatus and thereby modulates transcription regulation and chromatin formation. Can both act as an activator or a repressor depending on the context. Required for HUSH-mediated heterochromatin formation and gene silencing. Mediates MBD1-dependent transcriptional repression, probably by recruiting complexes containing SETDB1. Stabilizes SETDB1, is required to stimulate histone methyltransferase activity of SETDB1 and facilitates the conversion of dimethylated to trimethylated H3 'Lys-9' (H3K9me3). The complex formed with MBD1 and SETDB1 represses transcription and couples DNA methylation and histone H3 'Lys-9' trimethylation (H3K9me3). Facilitates telomerase TERT and TERC gene expression by SP1 in cancer cells. The polypeptide is Activating transcription factor 7-interacting protein 1 (Homo sapiens (Human)).